Here is a 343-residue protein sequence, read N- to C-terminus: Ribosomal RNA small subunit methyltransferase C (343 aa).

The protein belongs to the methyltransferase superfamily. RsmC family. Monomer.

It is found in the cytoplasm. It catalyses the reaction guanosine(1207) in 16S rRNA + S-adenosyl-L-methionine = N(2)-methylguanosine(1207) in 16S rRNA + S-adenosyl-L-homocysteine + H(+). Specifically methylates the guanine in position 1207 of 16S rRNA in the 30S particle. The chain is Ribosomal RNA small subunit methyltransferase C from Escherichia coli O81 (strain ED1a).